The following is a 356-amino-acid chain: Dual-specificity RNA methyltransferase RlmN (356 aa).

The active-site Proton acceptor is E89. Residues 108–341 (SHARYTICVS…CTIRESKGLD (234 aa)) enclose the Radical SAM core domain. C115 and C346 are disulfide-bonded. The [4Fe-4S] cluster site is built by C122, C126, and C129. S-adenosyl-L-methionine is bound by residues 172–173 (GE), S204, 227–229 (SLH), and N303. C346 serves as the catalytic S-methylcysteine intermediate.

It belongs to the radical SAM superfamily. RlmN family. Requires [4Fe-4S] cluster as cofactor.

Its subcellular location is the cytoplasm. It catalyses the reaction adenosine(2503) in 23S rRNA + 2 reduced [2Fe-2S]-[ferredoxin] + 2 S-adenosyl-L-methionine = 2-methyladenosine(2503) in 23S rRNA + 5'-deoxyadenosine + L-methionine + 2 oxidized [2Fe-2S]-[ferredoxin] + S-adenosyl-L-homocysteine. The catalysed reaction is adenosine(37) in tRNA + 2 reduced [2Fe-2S]-[ferredoxin] + 2 S-adenosyl-L-methionine = 2-methyladenosine(37) in tRNA + 5'-deoxyadenosine + L-methionine + 2 oxidized [2Fe-2S]-[ferredoxin] + S-adenosyl-L-homocysteine. In terms of biological role, specifically methylates position 2 of adenine 2503 in 23S rRNA and position 2 of adenine 37 in tRNAs. m2A2503 modification seems to play a crucial role in the proofreading step occurring at the peptidyl transferase center and thus would serve to optimize ribosomal fidelity. In Campylobacter jejuni subsp. jejuni serotype O:2 (strain ATCC 700819 / NCTC 11168), this protein is Dual-specificity RNA methyltransferase RlmN.